Here is a 297-residue protein sequence, read N- to C-terminus: MALLCPSLPSPNSRLFRCRSSNISSKYHGASKELMIARSGVSTRSISSEKGLSRRDLVLIGLSSPLSMFLPLSSPVTHAEEDVKMSGEELKMGTMVDDINAYSYAYPLDYPSEKLVFKWVESRKPERYSSAAPLSPDARLRIVSERVDLTDNLVISISIGPPNSRLTSKEKKTWSAKEVADSVLSDKSALRVTSSQRLEESSVLDAHASDIDGEPYWYYEYLVRKSPTKIAEASKLYRHYISSTAERDGYLYTINASTLGKQWDKMGPVLERAVGSFRLLPPTDSYVPPYKDPWRFW.

It belongs to the PsbP family.

The protein resides in the plastid. The protein localises to the chloroplast thylakoid lumen. Functionally, involved in strigolactone biosynthesis. In Arabidopsis thaliana (Mouse-ear cress), this protein is PsbP domain-containing protein 5, chloroplastic (PPD5).